The following is a 128-amino-acid chain: Hemoglobin subunit beta-1 (128 aa).

Positions histidine 2–histidine 128 constitute a Globin domain. Histidine 51 and histidine 74 together coordinate heme b.

Belongs to the globin family. In terms of assembly, hb 1 is a heterotetramer of two alpha and two beta-1 chains. In terms of tissue distribution, red blood cells (at protein level).

Functionally, involved in oxygen transport from gills to the various peripheral tissues. The chain is Hemoglobin subunit beta-1 from Somniosus microcephalus (Greenland sleeper shark).